Here is a 110-residue protein sequence, read N- to C-terminus: UPF0060 membrane protein AHA_2410 (110 aa).

4 helical membrane-spanning segments follow: residues 8–28 (GLFLVTALAEILGCYLPYLWL), 33–53 (SVWLLLPAGLSLMLFAWLLSL), 63–83 (AAYGGVYIFVAILWLWLVDGI), and 87–107 (LWDLVGSLVALCGMAIIMFAP).

This sequence belongs to the UPF0060 family.

It is found in the cell inner membrane. The sequence is that of UPF0060 membrane protein AHA_2410 from Aeromonas hydrophila subsp. hydrophila (strain ATCC 7966 / DSM 30187 / BCRC 13018 / CCUG 14551 / JCM 1027 / KCTC 2358 / NCIMB 9240 / NCTC 8049).